A 330-amino-acid chain; its full sequence is Succinylglutamate desuccinylase (330 aa).

Residues H53, E56, and H147 each contribute to the Zn(2+) site. Residue E210 is part of the active site.

It belongs to the AspA/AstE family. Succinylglutamate desuccinylase subfamily. Zn(2+) is required as a cofactor.

The catalysed reaction is N-succinyl-L-glutamate + H2O = L-glutamate + succinate. Its pathway is amino-acid degradation; L-arginine degradation via AST pathway; L-glutamate and succinate from L-arginine: step 5/5. Functionally, transforms N(2)-succinylglutamate into succinate and glutamate. The polypeptide is Succinylglutamate desuccinylase (Yersinia pseudotuberculosis serotype O:3 (strain YPIII)).